The following is a 188-amino-acid chain: UPF0301 protein XAC2918 (188 aa).

Belongs to the UPF0301 (AlgH) family.

In Xanthomonas axonopodis pv. citri (strain 306), this protein is UPF0301 protein XAC2918.